Reading from the N-terminus, the 263-residue chain is Hydroxyethylthiazole kinase 1 (263 aa).

Substrate is bound at residue methionine 42. Positions 118 and 164 each coordinate ATP. Glycine 191 is a substrate binding site.

It belongs to the Thz kinase family. Mg(2+) serves as cofactor.

It carries out the reaction 5-(2-hydroxyethyl)-4-methylthiazole + ATP = 4-methyl-5-(2-phosphooxyethyl)-thiazole + ADP + H(+). It functions in the pathway cofactor biosynthesis; thiamine diphosphate biosynthesis; 4-methyl-5-(2-phosphoethyl)-thiazole from 5-(2-hydroxyethyl)-4-methylthiazole: step 1/1. Its function is as follows. Catalyzes the phosphorylation of the hydroxyl group of 4-methyl-5-beta-hydroxyethylthiazole (THZ). The polypeptide is Hydroxyethylthiazole kinase 1 (Clostridium botulinum (strain ATCC 19397 / Type A)).